A 297-amino-acid polypeptide reads, in one-letter code: Ribonuclease HIII (297 aa).

The 217-residue stretch at 81–297 (IPIIGTDEVG…NTKKAQALLK (217 aa)) folds into the RNase H type-2 domain. A divalent metal cation contacts are provided by Asp-87, Glu-88, and Asp-192.

The protein belongs to the RNase HII family. RnhC subfamily. Mn(2+) serves as cofactor. Mg(2+) is required as a cofactor.

The protein resides in the cytoplasm. It carries out the reaction Endonucleolytic cleavage to 5'-phosphomonoester.. In terms of biological role, endonuclease that specifically degrades the RNA of RNA-DNA hybrids. The sequence is that of Ribonuclease HIII from Streptococcus agalactiae serotype Ia (strain ATCC 27591 / A909 / CDC SS700).